Consider the following 740-residue polypeptide: E3 ubiquitin-protein ligase TRIM9 (740 aa).

The segment at 7-30 (CPTCKQLYANPVLLPCFHALCLGC) adopts an RING-type; degenerate zinc-finger fold. Gly residues predominate over residues 64–73 (GNGGGAGGGA). Positions 64–114 (GNGGGAGGGAAAPVTNPNGPGTRHSSHSSAASTASSNTGSESVTSDQDQSD) are disordered. Residues 74-105 (AAPVTNPNGPGTRHSSHSSAASTASSNTGSES) show a composition bias toward low complexity. The B box-type 1; atypical zinc-finger motif lies at 195–244 (REALRCQMCETDPKVASLICEQCEIRYCDACRELTHPARGPLAKHTLVKP). Residues Cys-200, Cys-203, Cys-225, His-230, Cys-255, His-258, Cys-277, and His-283 each coordinate Zn(2+). The B box-type 2 zinc finger occupies 250-291 (QRESVCGEHEETLSQYCLSCKAPACGLCIGELRHQAHDVQSI). Residues 294–324 (TCKAQKTELSHNLQQLSEKARSTTEFIQRLK) are a coiled coil. The COS domain occupies 399–459 (LKETDSAAFL…ARAIDNLNFI (61 aa)). The region spanning 474–567 (APMTPTILPS…ELIGLQTAEV (94 aa)) is the Fibronectin type-III domain. In terms of domain architecture, B30.2/SPRY spans 549-736 (NSAGEGEYSE…TMHTAMDAPK (188 aa)).

It belongs to the TRIM/RBCC family. In terms of assembly, interacts (via fibronectin type-III domain) with pico. Interacts (via SPRY domain) with netrin receptor fra.

The protein resides in the cell projection. It is found in the axon. Its subcellular location is the perikaryon. The catalysed reaction is S-ubiquitinyl-[E2 ubiquitin-conjugating enzyme]-L-cysteine + [acceptor protein]-L-lysine = [E2 ubiquitin-conjugating enzyme]-L-cysteine + N(6)-ubiquitinyl-[acceptor protein]-L-lysine.. It participates in protein modification; protein ubiquitination. E3 ubiquitin-protein ligase activity. During embryonic and larval development, regulates the pattern of axonal projections of class IV nociceptive sensory neurons (C4da) downstream of netrin receptor fra. Regulates fine-scale topography of C4da axon terminals upon neuronal activity. During eye development, consolidates the attachment of R8 photoreceptor growth cones to the target medulla layer, probably downstream of fra. The chain is E3 ubiquitin-protein ligase TRIM9 from Drosophila melanogaster (Fruit fly).